Consider the following 382-residue polypeptide: Galactokinase (382 aa).

34–37 (EHTD) is a substrate binding site. Position 124 to 130 (124 to 130 (GAGLSSS)) interacts with ATP. Mg(2+) contacts are provided by Ser130 and Glu162. Residue Asp174 is the Proton acceptor of the active site. Residue Tyr223 participates in substrate binding.

This sequence belongs to the GHMP kinase family. GalK subfamily.

It localises to the cytoplasm. The enzyme catalyses alpha-D-galactose + ATP = alpha-D-galactose 1-phosphate + ADP + H(+). It participates in carbohydrate metabolism; galactose metabolism. Catalyzes the transfer of the gamma-phosphate of ATP to D-galactose to form alpha-D-galactose-1-phosphate (Gal-1-P). The chain is Galactokinase from Shigella flexneri.